The chain runs to 482 residues: Probable glycine dehydrogenase (decarboxylating) subunit 2 (482 aa).

K269 bears the N6-(pyridoxal phosphate)lysine mark.

The protein belongs to the GcvP family. C-terminal subunit subfamily. The glycine cleavage system is composed of four proteins: P, T, L and H. In this organism, the P 'protein' is a heterodimer of two subunits. Requires pyridoxal 5'-phosphate as cofactor.

It catalyses the reaction N(6)-[(R)-lipoyl]-L-lysyl-[glycine-cleavage complex H protein] + glycine + H(+) = N(6)-[(R)-S(8)-aminomethyldihydrolipoyl]-L-lysyl-[glycine-cleavage complex H protein] + CO2. In terms of biological role, the glycine cleavage system catalyzes the degradation of glycine. The P protein binds the alpha-amino group of glycine through its pyridoxal phosphate cofactor; CO(2) is released and the remaining methylamine moiety is then transferred to the lipoamide cofactor of the H protein. The protein is Probable glycine dehydrogenase (decarboxylating) subunit 2 of Pelodictyon phaeoclathratiforme (strain DSM 5477 / BU-1).